The primary structure comprises 467 residues: Transcription factor CRF1 (467 aa).

Over residues 1-10 (MLLSAPVNST) the composition is skewed to polar residues. 4 disordered regions span residues 1–42 (MLLS…VVLS), 62–110 (DFES…SSKT), 151–170 (SKSESHRQYHSPSASTTNED), and 341–361 (TYRDDESTDEDESLPTPDRKR). A compositionally biased stretch (basic residues) spans 11 to 23 (VRRKPHSPNKKKP). Residues 28–42 (TAASFSSSSSTVVLS) show a composition bias toward low complexity. Residues 89–102 (YSREENTNEVEEKT) are compositionally biased toward basic and acidic residues.

Interacts with FHL1 to form a repressor complex. The formation of the CRF1-FHL1 complex is inhibited by the TOR pathway. Phosphorylated by CDC28 and YAK1.

It localises to the cytoplasm. Its subcellular location is the nucleus. In terms of biological role, transcription factor, corepressor with FHL1 of ribosomal protein genes. May be involved in the blocking of the spread of silencing. The polypeptide is Transcription factor CRF1 (CRF1) (Saccharomyces cerevisiae (strain ATCC 204508 / S288c) (Baker's yeast)).